Here is a 197-residue protein sequence, read N- to C-terminus: Signal peptidase complex catalytic subunit SEC11 (197 aa).

The Cytoplasmic segment spans residues 1-14; sequence MLSSLAPYMANPRQ. Residues 15-33 traverse the membrane as a helical; Signal-anchor for type II membrane protein segment; sequence TLTQVLNFALVLSTAFMLW. Residues 34 to 197 are Lumenal-facing; that stretch reads KGLSVVTNST…MGLMVVLQRE (164 aa). N-linked (GlcNAc...) asparagine glycosylation is present at Asn41. Residues Ser53 and His92 each act as charge relay system in the active site. The segment covering 102–115 has biased composition (basic and acidic residues); sequence PGREDKKSVKKGGE. The disordered stretch occupies residues 102-134; sequence PGREDKKSVKKGGEEGEETSSTPSQKLLTKGDN. The active-site Charge relay system is Asp139. The segment at 183 to 194 is C-terminal short (CTS) helix; that stretch reads VLLGFMGLMVVL.

The protein belongs to the peptidase S26B family. Component of the signal peptidase complex (SPC) composed of a catalytic subunit SEC11 and three accessory subunits SPC1, SPC2 and SPC3. The complex induces a local thinning of the ER membrane which is used to measure the length of the signal peptide (SP) h-region of protein substrates. This ensures the selectivity of the complex towards h-regions shorter than 18-20 amino acids. SPC associates with the translocon complex.

Its subcellular location is the endoplasmic reticulum membrane. The enzyme catalyses Cleavage of hydrophobic, N-terminal signal or leader sequences from secreted and periplasmic proteins.. In terms of biological role, catalytic component of the signal peptidase complex (SPC) which catalyzes the cleavage of N-terminal signal sequences from nascent proteins as they are translocated into the lumen of the endoplasmic reticulum. Specifically cleaves N-terminal signal peptides that contain a hydrophobic alpha-helix (h-region) shorter than 18-20 amino acids. In Paracoccidioides lutzii (strain ATCC MYA-826 / Pb01) (Paracoccidioides brasiliensis), this protein is Signal peptidase complex catalytic subunit SEC11 (SEC11).